Reading from the N-terminus, the 269-residue chain is MFLINGHKQESLAVSDRATQFGDGCFTTARVIDGKVSLLSAHIQRLQDACQRLMISCDFWPQLEQEMKTLAAEQQNGVLKVVISRGSGGRGYSTLNSGPATRILSVTAYPAHYDRLRNEGITLALSPVRLGRNPHLAGIKHLNRLEQVLIRSHLEQTNADEALVLDSEGWVTECCAANLFWRKGNVVYTPRLDQAGVNGIMRQFCIRLLAQSSYQLVEVQASLEESLQADEMVICNALMPVMPVCACGDVSFSSATLYEYLAPLCERPN.

K140 carries the post-translational modification N6-(pyridoxal phosphate)lysine.

Belongs to the class-IV pyridoxal-phosphate-dependent aminotransferase family. As to quaternary structure, homodimer. Pyridoxal 5'-phosphate is required as a cofactor.

It carries out the reaction 4-amino-4-deoxychorismate = 4-aminobenzoate + pyruvate + H(+). The protein operates within cofactor biosynthesis; tetrahydrofolate biosynthesis; 4-aminobenzoate from chorismate: step 2/2. Functionally, involved in the biosynthesis of p-aminobenzoate (PABA), a precursor of tetrahydrofolate. Converts 4-amino-4-deoxychorismate into 4-aminobenzoate (PABA) and pyruvate. This is Aminodeoxychorismate lyase (pabC) from Escherichia coli (strain K12).